Consider the following 289-residue polypeptide: MMRRTLENRNAQTKQLQTAVSNVEKHFGELCQIFAAYVRKTARLRDKADLLVNEINAYAATETPHLKLGLMNFADEFAKLQDYRQAEVERLEAKVVEPLKTYGTIVKMKRDDLKATLTARNREAKQLTQLERTRQRNPSDRHVISQAETELQRAAMDASRTSRHLEETINNFERQKMKDIKTIFSEFITIEMLFHGKALEVYTAAYQNIQNIDEDEDLEVFRNSLYAPDYSSRLDIVRANSKSPLQRSLSAKCVSGTGQVSTCRLRKDQQAEDDEDDELDVTEEENFLK.

The N-terminal 47 residues, 1 to 47 (MMRRTLENRNAQTKQLQTAVSNVEKHFGELCQIFAAYVRKTARLRDK), are a transit peptide targeting the mitochondrion. A BAR-like region spans residues 10 to 220 (NAQTKQLQTA…NIDEDEDLEV (211 aa)). Residues 107 to 178 (KMKRDDLKAT…INNFERQKMK (72 aa)) adopt a coiled-coil conformation. The segment at 265–289 (LRKDQQAEDDEDDELDVTEEENFLK) is disordered. Residues 271–289 (AEDDEDDELDVTEEENFLK) are compositionally biased toward acidic residues.

Belongs to the CIBAR family. As to quaternary structure, homodimer (via BAR-like domain). Heterodimer with FAM92B (via BAR-like domains). Interacts (via BAR-like domain) with CBY1; this interaction is required for targeting FAM92A to centriole and cilium basal body. Interacts (via BAR-like domain) with CBY3; both proteins form a ninefold symmetric structure at the flagellar base; are recruited to the annulus in a mutually dependent manner and regulate annulus positionning.

The protein resides in the cytoplasm. It is found in the cytoskeleton. Its subcellular location is the microtubule organizing center. The protein localises to the centrosome. It localises to the centriole. The protein resides in the cilium basal body. It is found in the cell projection. Its subcellular location is the cilium. The protein localises to the nucleus. It localises to the mitochondrion inner membrane. The protein resides in the flagellum. Its function is as follows. Plays a critical role in regulating mitochondrial ultrastructure and function by maintaining the integrity of mitochondrial morphology, particularly the organization of cristae. Preferentially binds to negatively charged phospholipids like cardiolipin and phosphatidylinositol 4,5-bisphosphate enhancing its interaction with mitochondrial membranes. Induces membrane curvature and tubulation, which are critical for maintaining mitochondrial ultrastructure and the organization of cristae. Plays a crucial role in ciliogenesis. May play a role in limb development through its role in ciliogenesis. Plays a key role in the correct positioning of the annulus, a septin-based ring structure in the sperm flagellum, serving both as a physical barrier and a membrane diffusion barrier that separates the midpiece (MP) from the principal piece (PP). This positioning is essential for proper sperm motility and function. Interacts with CBY3 to form a complex which localizes to the curved membrane region of the flagellar pocket. By doing so, may provide stability and rigidity to the periannular membrane to prevent membrane deformation. This function is crucial for halting annulus migration at the proximal end of the fibrous sheath-containing PP. The polypeptide is CBY1-interacting BAR domain-containing protein 1 (Homo sapiens (Human)).